A 359-amino-acid polypeptide reads, in one-letter code: UDP-3-O-acylglucosamine N-acyltransferase (359 aa).

The Proton acceptor role is filled by His-253.

Belongs to the transferase hexapeptide repeat family. LpxD subfamily. In terms of assembly, homotrimer.

The enzyme catalyses a UDP-3-O-[(3R)-3-hydroxyacyl]-alpha-D-glucosamine + a (3R)-hydroxyacyl-[ACP] = a UDP-2-N,3-O-bis[(3R)-3-hydroxyacyl]-alpha-D-glucosamine + holo-[ACP] + H(+). The protein operates within bacterial outer membrane biogenesis; LPS lipid A biosynthesis. Its function is as follows. Catalyzes the N-acylation of UDP-3-O-acylglucosamine using 3-hydroxyacyl-ACP as the acyl donor. Is involved in the biosynthesis of lipid A, a phosphorylated glycolipid that anchors the lipopolysaccharide to the outer membrane of the cell. The protein is UDP-3-O-acylglucosamine N-acyltransferase of Burkholderia lata (strain ATCC 17760 / DSM 23089 / LMG 22485 / NCIMB 9086 / R18194 / 383).